The following is a 213-amino-acid chain: MRQNVLFEFGTPIVRVLNALDALSNGRGILVVDDENRENEGDMIFAAENMTVKQMALAIRYGSGIVCLCLTEEKCRQLKLPMMVKNNSNHYKTAFTVTIEASKGITTGVSAKDRLTTIKTSIEDYAKPSDLNRPGHVFPLRAHNGGVLSRSGHTEAAVDLTTLAGLKPFGVICEVTNEDGSMARTTEIIKFSKQYDMPVLTISDVIAYRMSNL.

Residues 37 to 38, Asp-42, 150 to 154, and Glu-174 contribute to the D-ribulose 5-phosphate site; these read RE and RSGHT. Residue Glu-38 coordinates Mg(2+). His-153 is a Mg(2+) binding site.

The protein belongs to the DHBP synthase family. In terms of assembly, homodimer. Mg(2+) serves as cofactor. Requires Mn(2+) as cofactor.

It carries out the reaction D-ribulose 5-phosphate = (2S)-2-hydroxy-3-oxobutyl phosphate + formate + H(+). The protein operates within cofactor biosynthesis; riboflavin biosynthesis; 2-hydroxy-3-oxobutyl phosphate from D-ribulose 5-phosphate: step 1/1. In terms of biological role, catalyzes the conversion of D-ribulose 5-phosphate to formate and 3,4-dihydroxy-2-butanone 4-phosphate. This chain is 3,4-dihydroxy-2-butanone 4-phosphate synthase, found in Blochmanniella floridana.